Consider the following 21-residue polypeptide: Fibrinogen beta chain (21 aa).

Position 1 is a pyrrolidone carboxylic acid (Gln1). A compositionally biased stretch (acidic residues) spans 1–11; sequence QHSTDYDEEEE. The disordered stretch occupies residues 1 to 21; the sequence is QHSTDYDEEEEDRAKLHLDAR. A glycan (O-linked (GalNAc...) threonine) is linked at Thr4. Residue Tyr6 is modified to Sulfotyrosine. The segment covering 12 to 21 has biased composition (basic and acidic residues); it reads DRAKLHLDAR.

Heterohexamer; disulfide linked. Contains 2 sets of 3 non-identical chains (alpha, beta and gamma). The 2 heterotrimers are in head to head conformation with the N-termini in a small central domain. Post-translationally, conversion of fibrinogen to fibrin is triggered by thrombin, which cleaves fibrinopeptides A and B from alpha and beta chains, and thus exposes the N-terminal polymerization sites responsible for the formation of the soft clot.

It is found in the secreted. Functionally, cleaved by the protease thrombin to yield monomers which, together with fibrinogen alpha (FGA) and fibrinogen gamma (FGG), polymerize to form an insoluble fibrin matrix. Fibrin has a major function in hemostasis as one of the primary components of blood clots. In addition, functions during the early stages of wound repair to stabilize the lesion and guide cell migration during re-epithelialization. Was originally thought to be essential for platelet aggregation, based on in vitro studies using anticoagulated blood. However subsequent studies have shown that it is not absolutely required for thrombus formation in vivo. Enhances expression of SELP in activated platelets. Maternal fibrinogen is essential for successful pregnancy. Fibrin deposition is also associated with infection, where it protects against IFNG-mediated hemorrhage. May also facilitate the antibacterial immune response via both innate and T-cell mediated pathways. This chain is Fibrinogen beta chain (FGB), found in Cervus elaphus (Red deer).